Reading from the N-terminus, the 104-residue chain is Large ribosomal subunit protein uL24 (104 aa).

The protein belongs to the universal ribosomal protein uL24 family. As to quaternary structure, part of the 50S ribosomal subunit.

One of two assembly initiator proteins, it binds directly to the 5'-end of the 23S rRNA, where it nucleates assembly of the 50S subunit. Functionally, one of the proteins that surrounds the polypeptide exit tunnel on the outside of the subunit. The polypeptide is Large ribosomal subunit protein uL24 (Pectobacterium atrosepticum (strain SCRI 1043 / ATCC BAA-672) (Erwinia carotovora subsp. atroseptica)).